Reading from the N-terminus, the 70-residue chain is Large ribosomal subunit protein bL31 (70 aa).

Zn(2+) contacts are provided by C16, C18, C37, and C40.

It belongs to the bacterial ribosomal protein bL31 family. Type A subfamily. Part of the 50S ribosomal subunit. Zn(2+) is required as a cofactor.

Functionally, binds the 23S rRNA. The sequence is that of Large ribosomal subunit protein bL31 from Haemophilus ducreyi (strain 35000HP / ATCC 700724).